Here is a 353-residue protein sequence, read N- to C-terminus: Holliday junction branch migration complex subunit RuvB (353 aa).

A disordered region spans residues 1-25; the sequence is MDPGPAGDEVSLAPQQETAEQDVET. The interval 1–188 is large ATPase domain (RuvB-L); sequence MDPGPAGDEV…FGFTAHMEFY (188 aa). Residues Leu27, Arg28, Gly69, Lys72, Thr73, Ser74, 135–137, Arg178, Tyr188, and Arg225 each bind ATP; that span reads EDY. Thr73 lines the Mg(2+) pocket. Residues 189 to 259 form a small ATPAse domain (RuvB-S) region; the sequence is EPAELELVVR…VARAALEVYD (71 aa). The interval 262 to 353 is head domain (RuvB-H); sequence EHGLDRLDRA…ATRSLFADEV (92 aa). Residues Arg317 and Arg322 each coordinate DNA.

It belongs to the RuvB family. As to quaternary structure, homohexamer. Forms an RuvA(8)-RuvB(12)-Holliday junction (HJ) complex. HJ DNA is sandwiched between 2 RuvA tetramers; dsDNA enters through RuvA and exits via RuvB. An RuvB hexamer assembles on each DNA strand where it exits the tetramer. Each RuvB hexamer is contacted by two RuvA subunits (via domain III) on 2 adjacent RuvB subunits; this complex drives branch migration. In the full resolvosome a probable DNA-RuvA(4)-RuvB(12)-RuvC(2) complex forms which resolves the HJ.

The protein localises to the cytoplasm. It catalyses the reaction ATP + H2O = ADP + phosphate + H(+). Its function is as follows. The RuvA-RuvB-RuvC complex processes Holliday junction (HJ) DNA during genetic recombination and DNA repair, while the RuvA-RuvB complex plays an important role in the rescue of blocked DNA replication forks via replication fork reversal (RFR). RuvA specifically binds to HJ cruciform DNA, conferring on it an open structure. The RuvB hexamer acts as an ATP-dependent pump, pulling dsDNA into and through the RuvAB complex. RuvB forms 2 homohexamers on either side of HJ DNA bound by 1 or 2 RuvA tetramers; 4 subunits per hexamer contact DNA at a time. Coordinated motions by a converter formed by DNA-disengaged RuvB subunits stimulates ATP hydrolysis and nucleotide exchange. Immobilization of the converter enables RuvB to convert the ATP-contained energy into a lever motion, pulling 2 nucleotides of DNA out of the RuvA tetramer per ATP hydrolyzed, thus driving DNA branch migration. The RuvB motors rotate together with the DNA substrate, which together with the progressing nucleotide cycle form the mechanistic basis for DNA recombination by continuous HJ branch migration. Branch migration allows RuvC to scan DNA until it finds its consensus sequence, where it cleaves and resolves cruciform DNA. This is Holliday junction branch migration complex subunit RuvB from Saccharopolyspora erythraea (strain ATCC 11635 / DSM 40517 / JCM 4748 / NBRC 13426 / NCIMB 8594 / NRRL 2338).